Here is a 237-residue protein sequence, read N- to C-terminus: Demethylmenaquinone methyltransferase (237 aa).

Residues T58, D79, and 107-108 (NA) contribute to the S-adenosyl-L-methionine site.

This sequence belongs to the class I-like SAM-binding methyltransferase superfamily. MenG/UbiE family.

The enzyme catalyses a 2-demethylmenaquinol + S-adenosyl-L-methionine = a menaquinol + S-adenosyl-L-homocysteine + H(+). It participates in quinol/quinone metabolism; menaquinone biosynthesis; menaquinol from 1,4-dihydroxy-2-naphthoate: step 2/2. Its function is as follows. Methyltransferase required for the conversion of demethylmenaquinol (DMKH2) to menaquinol (MKH2). The polypeptide is Demethylmenaquinone methyltransferase (Lactiplantibacillus plantarum (strain ATCC BAA-793 / NCIMB 8826 / WCFS1) (Lactobacillus plantarum)).